Consider the following 78-residue polypeptide: Acyl carrier protein (78 aa).

The 76-residue stretch at 2–77 (SDTAERVKKI…DAVKYIEKAT (76 aa)) folds into the Carrier domain. Ser37 bears the O-(pantetheine 4'-phosphoryl)serine mark.

The protein belongs to the acyl carrier protein (ACP) family. In terms of processing, 4'-phosphopantetheine is transferred from CoA to a specific serine of apo-ACP by AcpS. This modification is essential for activity because fatty acids are bound in thioester linkage to the sulfhydryl of the prosthetic group.

It localises to the cytoplasm. The protein operates within lipid metabolism; fatty acid biosynthesis. In terms of biological role, carrier of the growing fatty acid chain in fatty acid biosynthesis. This Chelativorans sp. (strain BNC1) protein is Acyl carrier protein.